The sequence spans 207 residues: Outer-membrane lipoprotein LolB (207 aa).

Residues 1 to 21 (MPLPDFRFIRLLPLAALVLTA) form the signal peptide. Residue Cys22 is the site of N-palmitoyl cysteine attachment. Residue Cys22 is the site of S-diacylglycerol cysteine attachment.

It belongs to the LolB family. As to quaternary structure, monomer.

It is found in the cell outer membrane. Plays a critical role in the incorporation of lipoproteins in the outer membrane after they are released by the LolA protein. This chain is Outer-membrane lipoprotein LolB, found in Escherichia coli O6:H1 (strain CFT073 / ATCC 700928 / UPEC).